Reading from the N-terminus, the 463-residue chain is Argininosuccinate lyase (463 aa).

Belongs to the lyase 1 family. Argininosuccinate lyase subfamily.

The protein localises to the cytoplasm. It catalyses the reaction 2-(N(omega)-L-arginino)succinate = fumarate + L-arginine. The protein operates within amino-acid biosynthesis; L-arginine biosynthesis; L-arginine from L-ornithine and carbamoyl phosphate: step 3/3. This chain is Argininosuccinate lyase, found in Ruegeria pomeroyi (strain ATCC 700808 / DSM 15171 / DSS-3) (Silicibacter pomeroyi).